The sequence spans 708 residues: Nicastrin (708 aa).

A signal peptide spans 1–34 (MATARGGSGPDPGSRGLLLLSFSVVLAGLCGGNS). The Lumenal portion of the chain corresponds to 35-668 (VERKIYIPLN…IFLIASKELE (634 aa)). Residues Asn44, Asn54, and Asn128 are each glycosylated (N-linked (GlcNAc...) asparagine). An intrachain disulfide couples Cys49 to Cys61. A disulfide bridge connects residues Cys139 and Cys158. N-linked (GlcNAc...) asparagine glycans are attached at residues Asn186 and Asn203. 2 cysteine pairs are disulfide-bonded: Cys194/Cys212 and Cys229/Cys247. N-linked (GlcNAc...) asparagine glycans are attached at residues Asn263, Asn386, Asn434, Asn463, Asn507, Asn529, Asn561, Asn572, Asn579, Asn593, and Asn611. Cysteines 585 and 619 form a disulfide. Residues 669–689 (FITLIVGFSILVFSLIVTYCI) form a helical membrane-spanning segment. The Cytoplasmic portion of the chain corresponds to 690 to 708 (NAKADVLFVAPREPGAVSY).

This sequence belongs to the nicastrin family. Component of the gamma-secretase complex. The functional gamma-secretase complex is composed of at least four polypeptides: a presenilin homodimer (PSEN1 or PSEN2), nicastrin (NCSTN), APH1 (APH1A or APH1B) and PEN2. Binds to proteolytic processed C-terminal fragments C83 and C99 of the amyloid precursor protein (APP). Interacts with PSEN1 and PSEN2. In terms of processing, N-glycosylated.

The protein resides in the membrane. The protein localises to the cytoplasmic vesicle membrane. It is found in the melanosome. Essential subunit of the gamma-secretase complex, an endoprotease complex that catalyzes the intramembrane cleavage of integral membrane proteins such as Notch receptors and APP (amyloid-beta precursor protein). The gamma-secretase complex plays a role in Notch and Wnt signaling cascades and regulation of downstream processes via its role in processing key regulatory proteins, and by regulating cytosolic CTNNB1 levels. The protein is Nicastrin (Ncstn) of Rattus norvegicus (Rat).